A 393-amino-acid polypeptide reads, in one-letter code: NAD(P)H-quinone oxidoreductase subunit H, chloroplastic (393 aa).

It belongs to the complex I 49 kDa subunit family. In terms of assembly, NDH is composed of at least 16 different subunits, 5 of which are encoded in the nucleus.

Its subcellular location is the plastid. It localises to the chloroplast thylakoid membrane. The enzyme catalyses a plastoquinone + NADH + (n+1) H(+)(in) = a plastoquinol + NAD(+) + n H(+)(out). The catalysed reaction is a plastoquinone + NADPH + (n+1) H(+)(in) = a plastoquinol + NADP(+) + n H(+)(out). In terms of biological role, NDH shuttles electrons from NAD(P)H:plastoquinone, via FMN and iron-sulfur (Fe-S) centers, to quinones in the photosynthetic chain and possibly in a chloroplast respiratory chain. The immediate electron acceptor for the enzyme in this species is believed to be plastoquinone. Couples the redox reaction to proton translocation, and thus conserves the redox energy in a proton gradient. The chain is NAD(P)H-quinone oxidoreductase subunit H, chloroplastic from Cucumis sativus (Cucumber).